We begin with the raw amino-acid sequence, 398 residues long: MALSANSDAVTYAKAANTRTAAETGDRIEWVKLSLAFLPLATPVSDAKVLTGRQKPLTEVAIIIAEIRSRDGFEGVGFSYSKRAGGQGIYAHAKEIADNLLGEDPNDIDKIYTKLLWAGASVGRSGMAVQAISPIDIALWDMKAKRAGLPLAKLLGAHRDSVQCYNTSGGFLHTPLDQVLKNVVISRENGIGGIKLKVGQPNCAEDIRRLTAVREALGDEFPLMVDANQQWDRETAIRMGRKMEQFNLIWIEEPLDAYDIEGHAQLAAALDTPIATGEMLTSFREHEQLILGNASDFVQPDAPRVGGISPFLKIMDLAAKHGRKLAPHFAMEVHLHLSAAYPLEPWLEHFEWLNPLFNEQLELRDGRMWISDRHGLGFTLSEQARRWTQLTCEFGKRP.

Substrate-binding positions include 46-48 (DAK), 82-83 (KR), and K195. The Proton acceptor role is filled by K197. D226 serves as a coordination point for Mg(2+). A substrate-binding site is contributed by N228. Positions 252 and 278 each coordinate Mg(2+). H328 acts as the Proton donor/acceptor in catalysis. Residue E348 coordinates substrate.

The protein belongs to the mandelate racemase/muconate lactonizing enzyme family. In terms of assembly, homooctamer; tetramer of dimers. Mg(2+) is required as a cofactor.

It carries out the reaction L-altrarate = 5-dehydro-4-deoxy-D-glucarate + H2O. The catalysed reaction is galactarate = 5-dehydro-4-deoxy-D-glucarate + H2O. It catalyses the reaction L-altrarate = galactarate. With respect to regulation, competitively inhibited by tartronate. Functionally, catalyzes the efficient dehydration of both L-talarate (also called L-altrarate) and galactarate to 5-keto-4-deoxy-D-glucarate (5-KDG). Also catalyzes the epimerization of L-talarate to galactarate; epimerization occurs in competition with dehydration. Is required for the utilization of L-talarate as a carbon source. Also functions in galactarate utilization. Is not active on other acid sugars. This chain is L-talarate/galactarate dehydratase, found in Salmonella typhimurium (strain LT2 / SGSC1412 / ATCC 700720).